A 266-amino-acid chain; its full sequence is Agamous-like MADS-box protein AGL97 (266 aa).

In terms of domain architecture, MADS-box spans 3–63 (GVKRKIAIEK…SNSNAAFYSF (61 aa)). A coiled-coil region spans residues 88–130 (WEDESLLKSENLEELREAMDSMSTMLRDLKELEKQRDHQTQTL).

Interacts with AGL27 and AGL62.

It is found in the nucleus. Functionally, putative transcription factor. This chain is Agamous-like MADS-box protein AGL97 (AGL97), found in Arabidopsis thaliana (Mouse-ear cress).